The sequence spans 385 residues: MNSLDLPKPPHETRVVVAMSGGVDSSVVAGLLKREGYDVVGVTLQLYDHGAATHRKGACCAGRDIHDARAVAETLGIPHYVLDYEDRFRESVIDRFAESYLSGETPIPCVECNRSVKFRDLLGLARDLGAEALATGHYVASRARPEGGRALYRALDPARDQSYFLYATTPEQLAYLRFPLGERPKDETRALARELGLAVADKADSQDICFVPQGGYADVIAKLRPEATRPGEIVDLDGRRLGEHEGIIHYTVGQRRGLKLSAGEPLYVVRLEPETARVVVGPRAALATRRIRLTDLNWLGDGAPEDIAERPVAVRVRSTREPRPARLSWNAAEACAEVELLVPEDGVSPGQACVIYADDDPRAQVLGGGTIRRIGALQAGAAEAA.

ATP contacts are provided by residues 18-25 (AMSGGVDS) and Leu-44. The active-site Nucleophile is the Cys-112. Residues Cys-112 and Cys-209 are joined by a disulfide bond. Gly-136 lines the ATP pocket. The interval 159-161 (RDQ) is interaction with tRNA. Catalysis depends on Cys-209, which acts as the Cysteine persulfide intermediate.

Belongs to the MnmA/TRMU family.

It localises to the cytoplasm. It carries out the reaction S-sulfanyl-L-cysteinyl-[protein] + uridine(34) in tRNA + AH2 + ATP = 2-thiouridine(34) in tRNA + L-cysteinyl-[protein] + A + AMP + diphosphate + H(+). Catalyzes the 2-thiolation of uridine at the wobble position (U34) of tRNA, leading to the formation of s(2)U34. The protein is tRNA-specific 2-thiouridylase MnmA of Methylorubrum extorquens (strain PA1) (Methylobacterium extorquens).